The following is a 90-amino-acid chain: Small ribosomal subunit protein bS20 (90 aa).

It belongs to the bacterial ribosomal protein bS20 family.

Functionally, binds directly to 16S ribosomal RNA. The chain is Small ribosomal subunit protein bS20 from Mesomycoplasma hyopneumoniae (strain J / ATCC 25934 / NCTC 10110) (Mycoplasma hyopneumoniae).